Reading from the N-terminus, the 251-residue chain is Small ribosomal subunit protein uS2 (251 aa).

Residues 232-251 (EAIAEMDEQVEEDAEEASND) are disordered.

Belongs to the universal ribosomal protein uS2 family.

This Chlorobaculum parvum (strain DSM 263 / NCIMB 8327) (Chlorobium vibrioforme subsp. thiosulfatophilum) protein is Small ribosomal subunit protein uS2.